Here is a 208-residue protein sequence, read N- to C-terminus: Outer-membrane lipoprotein carrier protein (208 aa).

The N-terminal stretch at 1-22 (MKKIFAIAALSLPLFSHFPAFA) is a signal peptide.

Belongs to the LolA family. As to quaternary structure, monomer.

Its subcellular location is the periplasm. Functionally, participates in the translocation of lipoproteins from the inner membrane to the outer membrane. Only forms a complex with a lipoprotein if the residue after the N-terminal Cys is not an aspartate (The Asp acts as a targeting signal to indicate that the lipoprotein should stay in the inner membrane). This chain is Outer-membrane lipoprotein carrier protein, found in Shewanella halifaxensis (strain HAW-EB4).